A 517-amino-acid polypeptide reads, in one-letter code: Methylmalonyl-CoA decarboxylase subunit alpha (517 aa).

The region spanning 4–260 is the CoA carboxyltransferase N-terminal domain; the sequence is AAKKIQDLQK…NNMEKAPEFG (257 aa). Residues 271-513 enclose the CoA carboxyltransferase C-terminal domain; it reads ELDALMPDNP…REKLPAKKHG (243 aa).

This sequence belongs to the AccD/PCCB family. In terms of assembly, the methylmalonyl-CoA decarboxylase is composed of four subunits: the carboxyltransferase alpha subunit (MmdA), the tunnel beta subunit (MmdB), the biotin-containing gamma subunit (MmdC) and the delta subunit (MmdD).

The protein resides in the cell membrane. It catalyses the reaction (S)-methylmalonyl-CoA + Na(+)(in) + H(+)(out) = propanoyl-CoA + Na(+)(out) + CO2. Functionally, carboxyltransferase subunit of the sodium ion pump methylmalonyl-CoA decarboxylase, which converts the chemical energy of a decarboxylation reaction into an electrochemical gradient of Na(+) ions across the cytoplasmic membrane, thereby creating a sodium ion motive force that is used for ATP synthesis. The alpha subunit catalyzes the Na(+)-independent carboxyltransfer from methylmalonyl-CoA to the prosthetic biotin group located on the gamma subunit. The polypeptide is Methylmalonyl-CoA decarboxylase subunit alpha (Propionigenium modestum).